Reading from the N-terminus, the 350-residue chain is Ion-translocating oxidoreductase complex subunit D (350 aa).

The next 5 helical transmembrane spans lie at 19–39 (LMLLVILACLPGFLAQSWFFG), 41–61 (GTLIQILLALVTALGSEALVL), 67–87 (PVKPALLDGSAALTAVLIGLS), 88–108 (LPPLLPWWMLVLGTAFAIIIA), and 122–142 (PAMVAYVLLLVSFPVQMTSWL). Residue Thr186 is modified to FMN phosphoryl threonine. A run of 4 helical transmembrane segments spans residues 213-233 (WGGIGWSWVNLGYLLGGLFLL), 242-262 (IPGAILGSLLLAATLGYLMTP), 264-284 (ATATPMFHLFSGATMLGAFFI), and 299-316 (LVYGVLIGVLVYVIRRFG).

The protein belongs to the NqrB/RnfD family. In terms of assembly, the complex is composed of six subunits: RnfA, RnfB, RnfC, RnfD, RnfE and RnfG. FMN is required as a cofactor.

The protein resides in the cell inner membrane. Part of a membrane-bound complex that couples electron transfer with translocation of ions across the membrane. This chain is Ion-translocating oxidoreductase complex subunit D, found in Aeromonas hydrophila subsp. hydrophila (strain ATCC 7966 / DSM 30187 / BCRC 13018 / CCUG 14551 / JCM 1027 / KCTC 2358 / NCIMB 9240 / NCTC 8049).